Consider the following 797-residue polypeptide: Xaa-Pro dipeptidyl-peptidase (797 aa).

Catalysis depends on charge relay system residues serine 370, aspartate 490, and histidine 521.

The protein belongs to the peptidase S15 family. As to quaternary structure, homodimer.

Its subcellular location is the cytoplasm. The enzyme catalyses Hydrolyzes Xaa-Pro-|- bonds to release unblocked, N-terminal dipeptides from substrates including Ala-Pro-|-p-nitroanilide and (sequentially) Tyr-Pro-|-Phe-Pro-|-Gly-Pro-|-Ile.. Its function is as follows. Removes N-terminal dipeptides sequentially from polypeptides having unsubstituted N-termini provided that the penultimate residue is proline. This is Xaa-Pro dipeptidyl-peptidase from Lacticaseibacillus casei (strain BL23) (Lactobacillus casei).